Consider the following 523-residue polypeptide: NAD(P)H-quinone oxidoreductase subunit 2 (523 aa).

13 consecutive transmembrane segments (helical) span residues Ala-29–Ala-49, Trp-57–Trp-77, Leu-94–Trp-114, Ala-128–Val-148, Leu-182–Leu-202, Ala-223–Phe-243, Pro-255–Leu-275, Leu-291–Gln-311, Met-317–Thr-337, Val-345–Phe-365, Leu-389–Gly-409, Val-424–Ile-444, and Val-477–Phe-497.

It belongs to the complex I subunit 2 family. As to quaternary structure, NDH-1 can be composed of about 15 different subunits; different subcomplexes with different compositions have been identified which probably have different functions.

The protein localises to the cellular thylakoid membrane. It carries out the reaction a plastoquinone + NADH + (n+1) H(+)(in) = a plastoquinol + NAD(+) + n H(+)(out). It catalyses the reaction a plastoquinone + NADPH + (n+1) H(+)(in) = a plastoquinol + NADP(+) + n H(+)(out). In terms of biological role, NDH-1 shuttles electrons from an unknown electron donor, via FMN and iron-sulfur (Fe-S) centers, to quinones in the respiratory and/or the photosynthetic chain. The immediate electron acceptor for the enzyme in this species is believed to be plastoquinone. Couples the redox reaction to proton translocation, and thus conserves the redox energy in a proton gradient. Cyanobacterial NDH-1 also plays a role in inorganic carbon-concentration. This Synechococcus sp. (strain WH7803) protein is NAD(P)H-quinone oxidoreductase subunit 2.